Here is a 456-residue protein sequence, read N- to C-terminus: Bifunctional protein GlmU (456 aa).

The segment at 1–229 is pyrophosphorylase; the sequence is MLNNAMSVVI…LSEVEGVNNR (229 aa). UDP-N-acetyl-alpha-D-glucosamine-binding positions include 11 to 14, lysine 25, glutamine 76, 81 to 82, 103 to 105, glycine 140, glutamate 154, asparagine 169, and asparagine 227; these read LAAG, GT, and YGD. Aspartate 105 is a Mg(2+) binding site. Residue asparagine 227 coordinates Mg(2+). Residues 230–250 form a linker region; the sequence is LQLSRLERVYQSEQAEKLLLA. The N-acetyltransferase stretch occupies residues 251–456; sequence GVMLRDPARF…EGWRRPVKKK (206 aa). Positions 333 and 351 each coordinate UDP-N-acetyl-alpha-D-glucosamine. Histidine 363 functions as the Proton acceptor in the catalytic mechanism. Residues tyrosine 366 and asparagine 377 each coordinate UDP-N-acetyl-alpha-D-glucosamine. Acetyl-CoA is bound by residues alanine 380, 386-387, serine 405, alanine 423, and arginine 440; that span reads NY.

This sequence in the N-terminal section; belongs to the N-acetylglucosamine-1-phosphate uridyltransferase family. It in the C-terminal section; belongs to the transferase hexapeptide repeat family. As to quaternary structure, homotrimer. Mg(2+) is required as a cofactor.

The protein localises to the cytoplasm. The catalysed reaction is alpha-D-glucosamine 1-phosphate + acetyl-CoA = N-acetyl-alpha-D-glucosamine 1-phosphate + CoA + H(+). It catalyses the reaction N-acetyl-alpha-D-glucosamine 1-phosphate + UTP + H(+) = UDP-N-acetyl-alpha-D-glucosamine + diphosphate. It functions in the pathway nucleotide-sugar biosynthesis; UDP-N-acetyl-alpha-D-glucosamine biosynthesis; N-acetyl-alpha-D-glucosamine 1-phosphate from alpha-D-glucosamine 6-phosphate (route II): step 2/2. The protein operates within nucleotide-sugar biosynthesis; UDP-N-acetyl-alpha-D-glucosamine biosynthesis; UDP-N-acetyl-alpha-D-glucosamine from N-acetyl-alpha-D-glucosamine 1-phosphate: step 1/1. Its pathway is bacterial outer membrane biogenesis; LPS lipid A biosynthesis. Its function is as follows. Catalyzes the last two sequential reactions in the de novo biosynthetic pathway for UDP-N-acetylglucosamine (UDP-GlcNAc). The C-terminal domain catalyzes the transfer of acetyl group from acetyl coenzyme A to glucosamine-1-phosphate (GlcN-1-P) to produce N-acetylglucosamine-1-phosphate (GlcNAc-1-P), which is converted into UDP-GlcNAc by the transfer of uridine 5-monophosphate (from uridine 5-triphosphate), a reaction catalyzed by the N-terminal domain. The protein is Bifunctional protein GlmU of Escherichia coli O127:H6 (strain E2348/69 / EPEC).